Consider the following 374-residue polypeptide: Queuine tRNA-ribosyltransferase (374 aa).

Residue D89 is the Proton acceptor of the active site. Substrate contacts are provided by residues 89–93 (DSGGF), D143, Q187, and G214. The tract at residues 245–251 (GVGKPED) is RNA binding. D264 serves as the catalytic Nucleophile. The tract at residues 269-273 (TRNAR) is RNA binding; important for wobble base 34 recognition. Zn(2+)-binding residues include C302, C304, C307, and H333.

Belongs to the queuine tRNA-ribosyltransferase family. Homodimer. Within each dimer, one monomer is responsible for RNA recognition and catalysis, while the other monomer binds to the replacement base PreQ1. Requires Zn(2+) as cofactor.

The enzyme catalyses 7-aminomethyl-7-carbaguanine + guanosine(34) in tRNA = 7-aminomethyl-7-carbaguanosine(34) in tRNA + guanine. It participates in tRNA modification; tRNA-queuosine biosynthesis. Catalyzes the base-exchange of a guanine (G) residue with the queuine precursor 7-aminomethyl-7-deazaguanine (PreQ1) at position 34 (anticodon wobble position) in tRNAs with GU(N) anticodons (tRNA-Asp, -Asn, -His and -Tyr). Catalysis occurs through a double-displacement mechanism. The nucleophile active site attacks the C1' of nucleotide 34 to detach the guanine base from the RNA, forming a covalent enzyme-RNA intermediate. The proton acceptor active site deprotonates the incoming PreQ1, allowing a nucleophilic attack on the C1' of the ribose to form the product. After dissociation, two additional enzymatic reactions on the tRNA convert PreQ1 to queuine (Q), resulting in the hypermodified nucleoside queuosine (7-(((4,5-cis-dihydroxy-2-cyclopenten-1-yl)amino)methyl)-7-deazaguanosine). This Shewanella sp. (strain MR-4) protein is Queuine tRNA-ribosyltransferase.